The following is a 159-amino-acid chain: MQKRAIYPGTFDPITNGHIDIVTRATQMFDHVILAIAASPSKKPMFTLEERVDLAQQATTHLGNVEVVGFSDLMANFARNQHATVLIRGLRAVADFEYEMQLAHMNRHLMPELESVFLMPSKEWSFISSSLVKEVARHQGDVTHFLPENVHQALMAKLA.

Position 10 (Thr-10) interacts with substrate. ATP-binding positions include 10–11 (TF) and His-18. Positions 42, 74, and 88 each coordinate substrate. Residues 89 to 91 (GLR), Glu-99, and 124 to 130 (WSFISSS) contribute to the ATP site.

The protein belongs to the bacterial CoaD family. As to quaternary structure, homohexamer. Mg(2+) is required as a cofactor.

It localises to the cytoplasm. It catalyses the reaction (R)-4'-phosphopantetheine + ATP + H(+) = 3'-dephospho-CoA + diphosphate. Its pathway is cofactor biosynthesis; coenzyme A biosynthesis; CoA from (R)-pantothenate: step 4/5. Functionally, reversibly transfers an adenylyl group from ATP to 4'-phosphopantetheine, yielding dephospho-CoA (dPCoA) and pyrophosphate. This is Phosphopantetheine adenylyltransferase from Escherichia coli O7:K1 (strain IAI39 / ExPEC).